The primary structure comprises 762 residues: cGMP-dependent protein kinase 2 (762 aa).

The tract at residues 1–25 (MGNGSVKPKHSKHPDGQSGNLSNEA) is disordered. Gly-2 carries the N-myristoyl glycine lipid modification. Phosphoserine is present on residues Ser-110 and Ser-117. The disordered stretch occupies residues 112-138 (LVSLHSRRGAKAGVSAEPTSRTYDLNK). The interval 168 to 283 (FLKRLDPQQI…DEEYRNFLRS (116 aa)) is cGMP-binding, high affinity; cAMP-binding, moderate affinity. 3',5'-cyclic GMP contacts are provided by residues 232–235 (GELA), 242–243 (RT), Lys-347, 356–359 (GEKA), 366–367 (RS), Asp-412, and Arg-415. Positions 286–416 (LLKNLPEDKL…TLNRDDEKRH (131 aa)) are cGMP-binding, high affinity; cAMP-binding, low affinity. Ser-431 carries the post-translational modification Phosphoserine. The Protein kinase domain occupies 453 to 711 (LEIIATLGVG…INDIKKHRWL (259 aa)). ATP contacts are provided by residues 459–467 (LGVGGFGRV) and Lys-482. Asp-576 functions as the Proton acceptor in the catalytic mechanism. Thr-609 carries the phosphothreonine modification. In terms of domain architecture, AGC-kinase C-terminal spans 712–762 (NGFNWEGLKARSLPSPLRRELSGPIDHSYFDKYPPEKGVPPDEMSGWDKDF). The tract at residues 740–762 (YFDKYPPEKGVPPDEMSGWDKDF) is disordered.

This sequence belongs to the protein kinase superfamily. AGC Ser/Thr protein kinase family. cGMP subfamily. In terms of assembly, interacts with GRIA1/GLUR1. In terms of processing, myristoylation mediates membrane localization. Highly expressed in intestinal mucosa and is 20 times less abundant in brain and kidney. Expressed in jejunum, in the apical domain of the villus epithelium.

It is found in the apical cell membrane. Its subcellular location is the cell membrane. The catalysed reaction is L-seryl-[protein] + ATP = O-phospho-L-seryl-[protein] + ADP + H(+). It carries out the reaction L-threonyl-[protein] + ATP = O-phospho-L-threonyl-[protein] + ADP + H(+). Its activity is regulated as follows. Binding of cGMP results in enzyme activation. Functionally, crucial regulator of intestinal secretion and bone growth. Phosphorylates and activates CFTR on the plasma membrane. Plays a key role in intestinal secretion by regulating cGMP-dependent translocation of CFTR in jejunum. Acts downstream of NMDAR to activate the plasma membrane accumulation of GRIA1/GLUR1 in synapse and increase synaptic plasticity. Phosphorylates GRIA1/GLUR1 at Ser-863. Acts as regulator of gene expression and activator of the extracellular signal-regulated kinases MAPK3/ERK1 and MAPK1/ERK2 in mechanically stimulated osteoblasts. Under fluid shear stress, mediates ERK activation and subsequent induction of FOS, FOSL1/FRA1, FOSL2/FRA2 and FOSB that play a key role in the osteoblast anabolic response to mechanical stimulation. This chain is cGMP-dependent protein kinase 2 (Prkg2), found in Rattus norvegicus (Rat).